Here is a 592-residue protein sequence, read N- to C-terminus: Aspartate--tRNA(Asp/Asn) ligase (592 aa).

Glu-182 provides a ligand contact to L-aspartate. The tract at residues 206–209 (QIFK) is aspartate. Residue Arg-228 participates in L-aspartate binding. ATP contacts are provided by residues 228 to 230 (RDE) and Gln-237. His-455 provides a ligand contact to L-aspartate. Glu-489 provides a ligand contact to ATP. Residue Arg-496 participates in L-aspartate binding. 541–544 (GLDR) is an ATP binding site.

It belongs to the class-II aminoacyl-tRNA synthetase family. Type 1 subfamily. As to quaternary structure, homodimer.

The protein resides in the cytoplasm. It carries out the reaction tRNA(Asx) + L-aspartate + ATP = L-aspartyl-tRNA(Asx) + AMP + diphosphate. Functionally, aspartyl-tRNA synthetase with relaxed tRNA specificity since it is able to aspartylate not only its cognate tRNA(Asp) but also tRNA(Asn). Reaction proceeds in two steps: L-aspartate is first activated by ATP to form Asp-AMP and then transferred to the acceptor end of tRNA(Asp/Asn). The polypeptide is Aspartate--tRNA(Asp/Asn) ligase (Thermoanaerobacter pseudethanolicus (strain ATCC 33223 / 39E) (Clostridium thermohydrosulfuricum)).